The following is a 587-amino-acid chain: Proteasome-associated ATPase (587 aa).

The stretch at 1–94 (MAARDDAEAR…KEEVDRLAQP (94 aa)) forms a coiled coil. 276 to 281 (GCGKTL) serves as a coordination point for ATP. The segment at 586-587 (YL) is docks into pockets in the proteasome alpha-ring.

The protein belongs to the AAA ATPase family. In terms of assembly, homohexamer. Assembles into a hexameric ring structure that caps the 20S proteasome core. Strongly interacts with the prokaryotic ubiquitin-like protein Pup through a hydrophobic interface; the interacting region of ARC lies in its N-terminal coiled-coil domain. There is one Pup binding site per ARC hexamer ring. Upon ATP-binding, the C-terminus of ARC interacts with the alpha-rings of the proteasome core, possibly by binding to the intersubunit pockets.

Its pathway is protein degradation; proteasomal Pup-dependent pathway. ATPase which is responsible for recognizing, binding, unfolding and translocation of pupylated proteins into the bacterial 20S proteasome core particle. May be essential for opening the gate of the 20S proteasome via an interaction with its C-terminus, thereby allowing substrate entry and access to the site of proteolysis. Thus, the C-termini of the proteasomal ATPase may function like a 'key in a lock' to induce gate opening and therefore regulate proteolysis. This is Proteasome-associated ATPase from Streptosporangium roseum (strain ATCC 12428 / DSM 43021 / JCM 3005 / KCTC 9067 / NCIMB 10171 / NRRL 2505 / NI 9100).